Here is a 206-residue protein sequence, read N- to C-terminus: Ribosomal RNA large subunit methyltransferase E (206 aa).

Residues Gly-60, Trp-62, Asp-80, Asp-96, and Asp-121 each coordinate S-adenosyl-L-methionine. Residue Lys-161 is the Proton acceptor of the active site.

Belongs to the class I-like SAM-binding methyltransferase superfamily. RNA methyltransferase RlmE family.

The protein resides in the cytoplasm. It catalyses the reaction uridine(2552) in 23S rRNA + S-adenosyl-L-methionine = 2'-O-methyluridine(2552) in 23S rRNA + S-adenosyl-L-homocysteine + H(+). Specifically methylates the uridine in position 2552 of 23S rRNA at the 2'-O position of the ribose in the fully assembled 50S ribosomal subunit. This Nitrosospira multiformis (strain ATCC 25196 / NCIMB 11849 / C 71) protein is Ribosomal RNA large subunit methyltransferase E.